The primary structure comprises 593 residues: 3-hydroxy-3-methylglutaryl-coenzyme A reductase (593 aa).

Residues 1–36 form a disordered region; the sequence is MDVRRRSINSIHQIPSVGGTAPPMLKPKQPTKVDAV. The next 2 helical transmembrane spans lie at 52–72 and 94–114; these read LYITNGVFFTLFFTVVYYLLV and AIFTFVASFIYLLGFFGIGLV. Residues 115–177 form a linker region; sequence QPFTSRSSHD…PVPISPPSSE (63 aa). The interval 178 to 593 is catalytic; sequence EDEEIIKSVV…SNKDVTKASS (416 aa). The Charge relay system role is filled by E272. An N-linked (GlcNAc...) asparagine glycan is attached at N336. K404 functions as the Charge relay system in the catalytic mechanism. N449 carries an N-linked (GlcNAc...) asparagine glycan. The active-site Charge relay system is the D480. H578 (proton donor) is an active-site residue. N582 carries an N-linked (GlcNAc...) asparagine glycan.

Belongs to the HMG-CoA reductase family.

Its subcellular location is the endoplasmic reticulum membrane. The catalysed reaction is (R)-mevalonate + 2 NADP(+) + CoA = (3S)-3-hydroxy-3-methylglutaryl-CoA + 2 NADPH + 2 H(+). It functions in the pathway metabolic intermediate biosynthesis; (R)-mevalonate biosynthesis; (R)-mevalonate from acetyl-CoA: step 3/3. Catalyzes the synthesis of mevalonate. The specific precursor of all isoprenoid compounds present in plants. The chain is 3-hydroxy-3-methylglutaryl-coenzyme A reductase from Camptotheca acuminata (Happy tree).